The following is a 333-amino-acid chain: Phosphate acyltransferase (333 aa).

It belongs to the PlsX family. Homodimer. Probably interacts with PlsY.

It is found in the cytoplasm. It catalyses the reaction a fatty acyl-[ACP] + phosphate = an acyl phosphate + holo-[ACP]. Its pathway is lipid metabolism; phospholipid metabolism. Functionally, catalyzes the reversible formation of acyl-phosphate (acyl-PO(4)) from acyl-[acyl-carrier-protein] (acyl-ACP). This enzyme utilizes acyl-ACP as fatty acyl donor, but not acyl-CoA. The chain is Phosphate acyltransferase from Bacillus subtilis (strain 168).